The following is a 762-amino-acid chain: 5-methyltetrahydropteroyltriglutamate--homocysteine methyltransferase (762 aa).

5-methyltetrahydropteroyltri-L-glutamate-binding positions include 17-20 (REWK) and K111. Residues 435–437 (IGS) and E488 each bind L-homocysteine. L-methionine contacts are provided by residues 435-437 (IGS) and E488. Residues 519–520 (RC) and W565 contribute to the 5-methyltetrahydropteroyltri-L-glutamate site. Residue D603 coordinates L-homocysteine. Position 603 (D603) interacts with L-methionine. E609 provides a ligand contact to 5-methyltetrahydropteroyltri-L-glutamate. Residues H645, C647, and E669 each coordinate Zn(2+). The active-site Proton donor is H698. C730 is a binding site for Zn(2+).

It belongs to the vitamin-B12 independent methionine synthase family. The cofactor is Zn(2+).

The catalysed reaction is 5-methyltetrahydropteroyltri-L-glutamate + L-homocysteine = tetrahydropteroyltri-L-glutamate + L-methionine. It participates in amino-acid biosynthesis; L-methionine biosynthesis via de novo pathway; L-methionine from L-homocysteine (MetE route): step 1/1. Its function is as follows. Catalyzes the transfer of a methyl group from 5-methyltetrahydrofolate to homocysteine resulting in methionine formation. This Bacillus cereus (strain G9842) protein is 5-methyltetrahydropteroyltriglutamate--homocysteine methyltransferase.